A 350-amino-acid polypeptide reads, in one-letter code: MCRCPPEHHDGRMTSAEVGAAAGGAQAAGPPEWPPGSPQALRQPGRARVAMAALVWLLAGASMSSLNKWIFTVHGFGRPLLLSALHMLVAALACHRGARRPMPGGTRCRVLLLSLTFGTSMACGNVGLRAVPLDLAQLVTTTTPLFTLALSALLLGRRHHPLQLAAMGPLCLGAACSLAGEFRTPPTGCGFLLAATCLRGLKSVQQSALLQEERLDAVTLLYATSLPSFCLLAGAALVLEAGVAPPPTAGDSRLWACILLSCLLSVLYNLASFSLLALTSALTVHVLGNLTVVGNLILSRLLFGSRLSALSYVGIALTLSGMFLYHNCEFVASWAARRGLWRRDQPSKGL.

Residues 19 to 30 (GAAAGGAQAAGP) show a composition bias toward low complexity. The disordered stretch occupies residues 19–42 (GAAAGGAQAAGPPEWPPGSPQALR). 8 consecutive transmembrane segments (helical) span residues 51-71 (MAALVWLLAGASMSSLNKWIF), 73-93 (VHGFGRPLLLSALHMLVAALA), 110-132 (VLLLSLTFGTSMACGNVGLRAVP), 135-155 (LAQLVTTTTPLFTLALSALLL), 218-238 (VTLLYATSLPSFCLLAGAALV), 258-278 (ILLSCLLSVLYNLASFSLLAL), 279-299 (TSALTVHVLGNLTVVGNLILS), and 312-332 (YVGIALTLSGMFLYHNCEFVA). An EamA domain is found at 125 to 179 (NVGLRAVPLDLAQLVTTTTPLFTLALSALLLGRRHHPLQLAAMGPLCLGAACSLA).

This sequence belongs to the TPT transporter family. SLC35E subfamily.

The protein localises to the membrane. In terms of biological role, putative transporter. This Homo sapiens (Human) protein is Solute carrier family 35 member E4 (SLC35E4).